The following is a 312-amino-acid chain: HPr kinase/phosphorylase (312 aa).

Residues His139 and Lys160 contribute to the active site. 154–161 lines the ATP pocket; sequence GDSGIGKS. Ser161 serves as a coordination point for Mg(2+). Catalysis depends on Asp178, which acts as the Proton acceptor; for phosphorylation activity. Proton donor; for dephosphorylation activity. The segment at 202–211 is important for the catalytic mechanism of both phosphorylation and dephosphorylation; that stretch reads IEIRGVGIID. Glu203 is a binding site for Mg(2+). The active site involves Arg244. Residues 265–270 form an important for the catalytic mechanism of dephosphorylation region; the sequence is PVKTGR.

This sequence belongs to the HPrK/P family. In terms of assembly, homohexamer. It depends on Mg(2+) as a cofactor.

It carries out the reaction [HPr protein]-L-serine + ATP = [HPr protein]-O-phospho-L-serine + ADP + H(+). The enzyme catalyses [HPr protein]-O-phospho-L-serine + phosphate + H(+) = [HPr protein]-L-serine + diphosphate. Functionally, catalyzes the ATP- as well as the pyrophosphate-dependent phosphorylation of a specific serine residue in HPr, a phosphocarrier protein of the phosphoenolpyruvate-dependent sugar phosphotransferase system (PTS). HprK/P also catalyzes the pyrophosphate-producing, inorganic phosphate-dependent dephosphorylation (phosphorolysis) of seryl-phosphorylated HPr (P-Ser-HPr). The two antagonistic activities of HprK/P are regulated by several intracellular metabolites, which change their concentration in response to the absence or presence of rapidly metabolisable carbon sources (glucose, fructose, etc.) in the growth medium. Therefore, by controlling the phosphorylation state of HPr, HPrK/P is a sensor enzyme that plays a major role in the regulation of carbon metabolism and sugar transport: it mediates carbon catabolite repression (CCR), and regulates PTS-catalyzed carbohydrate uptake and inducer exclusion. In Streptococcus pneumoniae serotype 4 (strain ATCC BAA-334 / TIGR4), this protein is HPr kinase/phosphorylase.